The following is a 109-amino-acid chain: Elongation factor G, chloroplastic (109 aa).

It belongs to the GTP-binding elongation factor family. EF-G/EF-2 subfamily.

The protein localises to the plastid. The protein resides in the chloroplast. Its pathway is protein biosynthesis; polypeptide chain elongation. In terms of biological role, chloroplast-localized elongation factor EF-G involved in protein synthesis in plastids. Catalyzes the GTP-dependent ribosomal translocation step during translation elongation. During this step, the ribosome changes from the pre-translocational (PRE) to the post-translocational (POST) state as the newly formed A-site-bound peptidyl-tRNA and P-site-bound deacylated tRNA move to the P and E sites, respectively. Catalyzes the coordinated movement of the two tRNA molecules, the mRNA and conformational changes in the ribosome. The polypeptide is Elongation factor G, chloroplastic (Arachis hypogaea (Peanut)).